We begin with the raw amino-acid sequence, 485 residues long: Noelin (485 aa).

Positions 1–24 (MSVPLLKIGVVLSTMAMITNWMSQ) are cleaved as a signal peptide. Residues N33, N103, N187, N288, N307, N394, N431, and N473 are each glycosylated (N-linked (GlcNAc...) asparagine). Positions 87–225 (RDARTKQLRQ…ERLRACMQKL (139 aa)) form a coiled coil. The Olfactomedin-like domain maps to 226–478 (ACGKLTGISD…QTLYNVTLFH (253 aa)). C227 and C409 are disulfide-bonded.

Homotetramer; disulfide-linked. Dimer of dimers, giving rise to a V-shaped homotretramer. Isoform 1 and isoform 3 interact with RTN4R. Identified in a complex with RTN4R and LINGO1. Peripherally associated with AMPAR complex. AMPAR complex consists of an inner core made of 4 pore-forming GluA/GRIA proteins (GRIA1, GRIA2, GRIA3 and GRIA4) and 4 major auxiliary subunits arranged in a twofold symmetry. One of the two pairs of distinct binding sites is occupied either by CNIH2, CNIH3 or CACNG2, CACNG3. The other harbors CACNG2, CACNG3, CACNG4, CACNG8 or GSG1L. This inner core of AMPAR complex is complemented by outer core constituents binding directly to the GluA/GRIA proteins at sites distinct from the interaction sites of the inner core constituents. Outer core constituents include at least PRRT1, PRRT2, CKAMP44/SHISA9, FRRS1L and NRN1. The proteins of the inner and outer core serve as a platform for other, more peripherally associated AMPAR constituents, including OLFM1. Alone or in combination, these auxiliary subunits control the gating and pharmacology of the AMPAR complex and profoundly impact their biogenesis and protein processing. Interacts with OLFM2. In terms of processing, in isoform 3 and isoform 4, the signal peptide is predicted to end in position 17. As to expression, expressed in the brain (at protein level). Expressed in the brain, predominantly in the cortex and hippocampus. In the pituitary only the two A-type and in the adrenal glands only the two B-type forms were detected.

The protein resides in the secreted. It is found in the synapse. The protein localises to the endoplasmic reticulum. It localises to the cell projection. Its subcellular location is the axon. The protein resides in the perikaryon. Functionally, contributes to the regulation of axonal growth in the embryonic and adult central nervous system by inhibiting interactions between RTN4R and LINGO1. Inhibits RTN4R-mediated axon growth cone collapse. May play an important role in regulating the production of neural crest cells by the neural tube. May be required for normal responses to olfactory stimuli. This Rattus norvegicus (Rat) protein is Noelin (Olfm1).